Here is a 275-residue protein sequence, read N- to C-terminus: Low affinity immunoglobulin gamma Fc region receptor III-A (275 aa).

The signal sequence occupies residues 1-23 (MSVWTSRKAAEDNDTSLSSGIRA). Topologically, residues 24–207 (GLQKAVVTLH…SPSTFPPWHQ (184 aa)) are extracellular. Ig-like C2-type domains are found at residues 28 to 92 (AVVT…YTCQ) and 101 to 192 (PVNL…LRIT). Cystine bridges form between C49/C91 and C131/C175. N-linked (GlcNAc...) asparagine glycans are attached at residues N65, N168, and N183. A helical membrane pass occupies residues 208–228 (ITFCLLIGLLFTIDTVMYFSV). Residues 229 to 275 (QKGLRRSTADYEEPEVHWSKEPENKTISEEKQSFRSSRANSETPENR) are Cytoplasmic-facing. Residues 237 to 275 (ADYEEPEVHWSKEPENKTISEEKQSFRSSRANSETPENR) are disordered. Position 239 is a phosphotyrosine (Y239). Residues 242-261 (PEVHWSKEPENKTISEEKQS) are compositionally biased toward basic and acidic residues. Positions 262 to 275 (FRSSRANSETPENR) are enriched in polar residues.

As to quaternary structure, forms a heterooligomeric complex with ITAM-containing signaling subunits FCER1G. Interacts (via transmembrane domain) with signaling subunits; this interaction is a prerequisite for receptor complex expression on the cell surface and intracellular signal transduction. Binds the Fc region of antigen-complexed IgG. Post-translationally, N-glycosylated. Phosphorylated following receptor ligation.

The protein localises to the cell membrane. Its function is as follows. Receptor for the invariable Fc fragment of immunoglobulin gamma (IgG). Binds with intermediate affinity to both IgG2a and IgG2b. Can bind to IgG2a and IgG2b monomers. Does not display binding to IgG1 or IgG3. Recognizes neutralizing virus-specific IgGs displayed on the cell surface of infected cells and triggers antibody-dependent cellular cytotoxicity (ADCC). Confers protection to lethal influenza virus infection. On splenic dendritic cells, uptakes antigen immune complexes and efficiently divert them into MHC class I and II antigen presentation pathways to provide for superior priming of CD4-positive and CD8-positive T cell immune responses. Mediates neutrophil activation by IgG complexes redundantly with FCGR2A. Plays a role in promoting bone resorption by enhancing osteoclast differentiation following binding to IgG2a. Also acts as a receptor for the Fc region of immunoglobulin epsilon (IgE). Binds with low affinity to both the a and b allotypes of IgE. Has also been shown to bind to IgE allotype a only but not to allotype b. Binds aggregated IgE but not the monomeric form and bound monomeric IgG is readily displaced by IgE complexes. Binding to IgE promotes macrophage-mediated phagocytosis, antigen presentation to T cells, production of pro-inflammatory cytokines and the late phase of cutaneous allergic reactions. Mediates enhanced ADCC in response to afucosylated IgGs. This chain is Low affinity immunoglobulin gamma Fc region receptor III-A, found in Cricetulus griseus (Chinese hamster).